We begin with the raw amino-acid sequence, 425 residues long: tRNA(Ile)-lysidine synthase (425 aa).

27–32 is a binding site for ATP; that stretch reads SGGLDS.

It belongs to the tRNA(Ile)-lysidine synthase family.

It localises to the cytoplasm. The enzyme catalyses cytidine(34) in tRNA(Ile2) + L-lysine + ATP = lysidine(34) in tRNA(Ile2) + AMP + diphosphate + H(+). In terms of biological role, ligates lysine onto the cytidine present at position 34 of the AUA codon-specific tRNA(Ile) that contains the anticodon CAU, in an ATP-dependent manner. Cytidine is converted to lysidine, thus changing the amino acid specificity of the tRNA from methionine to isoleucine. The sequence is that of tRNA(Ile)-lysidine synthase from Streptococcus pneumoniae (strain Taiwan19F-14).